Here is a 568-residue protein sequence, read N- to C-terminus: Circadian clock protein KaiC2 (568 aa).

KaiC domains are found at residues 11–250 (IKCP…SVSQ) and 251–485 (ERIS…LTGT). A phosphoserine; by autocatalysis mark is found at Ser423 and Ser424.

Belongs to the KaiC family. Multimerizes, probably forming homohexamers, no interaction with KaiC1 or KaiC3 is seen.

It carries out the reaction L-seryl-[protein] + ATP = O-phospho-L-seryl-[protein] + ADP + H(+). It catalyses the reaction L-threonyl-[protein] + ATP = O-phospho-L-threonyl-[protein] + ADP + H(+). The enzyme catalyses ATP + H2O = ADP + phosphate + H(+). Its function is as follows. Autophosphorylates independently of KaiA. The polypeptide is Circadian clock protein KaiC2 (Synechocystis sp. (strain ATCC 27184 / PCC 6803 / Kazusa)).